A 500-amino-acid polypeptide reads, in one-letter code: DNA polymerase processivity factor (500 aa).

The tract at residues 388–500 (VSESDDAAAE…QEPANKRGKR (113 aa)) is disordered. A compositionally biased stretch (polar residues) spans 438 to 449 (TLQQSAQPSSPA).

It belongs to the herpesviridae DNA polymerase processivity factor family. In terms of assembly, interacts with the DNA polymerase catalytic subunit UL30. Interacts with the origin-binding protein.

The protein resides in the host nucleus. Plays an essential role in viral DNA replication by acting as the polymerase accessory subunit. Associates with the viral polymerase to increase its processivity and forms high-affinity direct interactions with DNA. Facilitates the origin-binding protein UL9 loading onto DNA thus increasing its ability to assemble into a functional complex capable of unwinding duplex DNA. This chain is DNA polymerase processivity factor (UL42), found in Amazona oratrix (yellow-headed parrot).